We begin with the raw amino-acid sequence, 344 residues long: Arginine N-succinyltransferase (344 aa).

Position 125 (L125) interacts with succinyl-CoA. The active-site Proton donor is the H229.

This sequence belongs to the arginine N-succinyltransferase family.

It carries out the reaction succinyl-CoA + L-arginine = N(2)-succinyl-L-arginine + CoA + H(+). It functions in the pathway amino-acid degradation; L-arginine degradation via AST pathway; L-glutamate and succinate from L-arginine: step 1/5. Its function is as follows. Catalyzes the transfer of succinyl-CoA to arginine to produce N(2)-succinylarginine. The chain is Arginine N-succinyltransferase from Citrobacter koseri (strain ATCC BAA-895 / CDC 4225-83 / SGSC4696).